A 3970-amino-acid chain; its full sequence is Polyketide synthase-nonribosomal peptide synthetase hybrid himA (3970 aa).

Residues 8–443 (SEPIAIIGSA…GTNSHAILES (436 aa)) form the Ketosynthase family 3 (KS3) domain. Catalysis depends on for beta-ketoacyl synthase activity residues cysteine 181, histidine 320, and histidine 363. The interval 561 to 876 (IFTGQGAQWP…PYAGLLHRGR (316 aa)) is malonyl-CoA:ACP transacylase (MAT) domain. An N-terminal hotdog fold region spans residues 949–1083 (HELLGVRTSD…GMVHLHLGEP (135 aa)). The tract at residues 949–1253 (HELLGVRTSD…GLTVVALSST (305 aa)) is dehydratase (DH) domain. Residues 949–1256 (HELLGVRTSD…VVALSSTGPA (308 aa)) form the PKS/mFAS DH domain. Residue histidine 981 is the Proton acceptor; for dehydratase activity of the active site. The C-terminal hotdog fold stretch occupies residues 1098–1256 (GLNRVDLDEF…VVALSSTGPA (159 aa)). Residue aspartate 1158 is the Proton donor; for dehydratase activity of the active site. Residues 2060-2234 (TYVMIGLTGE…ASVLDIGMVS (175 aa)) are ketoreductase (KR) domain. One can recognise a Carrier 1 domain in the interval 2342 to 2419 (AIAAILTESF…TLAEEVAKEL (78 aa)). Serine 2379 bears the O-(pantetheine 4'-phosphoryl)serine mark. The interval 2420 to 2482 (FEDRSTSAPP…NDDSDPTAQC (63 aa)) is disordered. A compositionally biased stretch (low complexity) spans 2445 to 2466 (GSSTDPSSNSDSKSGFDGFSSD). Positions 2467-2477 (DSSDIANDDSD) are enriched in acidic residues. The segment at 2487 to 2919 (PMSLSQARMW…ATTPTERVAT (433 aa)) is condensation (C) domain. The segment at 2974-3381 (SYKAMSDRVN…LGDIANAILK (408 aa)) is adenylation (A) domain. The disordered stretch occupies residues 3466-3495 (RPLPASGDEDGDEDTETETGADADADAGAD). Residues 3472–3492 (GDEDGDEDTETETGADADADA) show a composition bias toward acidic residues. In terms of domain architecture, Carrier 2 spans 3496-3574 (TTLSDIHSKL…AIAERILRGV (79 aa)). The residue at position 3534 (serine 3534) is an O-(pantetheine 4'-phosphoryl)serine. The interval 3633-3866 (LTGATGFLGR…FIRVETVAEE (234 aa)) is reductase (R) domain.

In the C-terminal section; belongs to the NRP synthetase family.

Its pathway is secondary metabolite biosynthesis. In terms of biological role, polyketide synthase-nonribosomal peptide synthetase hybrid; part of the him gene cluster that mediates the biosynthesis of himeic acid A, a ubiquitin-activating enzyme (E1) inhibitor. First, himA, together with the trans-enoyl reductase himH, catalyzes the formation of apolyketide chain, which is then condensed with leucine by the NRPS activity of himA. Dieckmann cyclization and release from himA gives a tetramic acid intermediate as the product of himA PKS-NRPS. HimG then catalyzes alpha-oxidation of the tetramic acid ring, with a subsequent rearrangement to yield apyrone intermediate. Two terminal methyl groups of polyketide and amide side chains are oxidized to carboxylic acids by himC cytochrome P450 monooxygenase to form himeic acid A. Himeic acid A is further converted to himeic acids B and C during culture growth. No gene responsible for pyrone to pyridone conversion was found in the him gene cluster and himeic acid A is non-enzymatically converted to himeic acid C by the incorporation of an ammonium nitrogen atom in a pH5 buffer, and to himeic acid B at a conversion ratio of 50% during incubation in MeOH for 5 days. The sequence is that of Polyketide synthase-nonribosomal peptide synthetase hybrid himA from Aspergillus japonicus.